A 285-amino-acid polypeptide reads, in one-letter code: Bifunctional protein FolD (285 aa).

Residues 165-167 (GRS) and S190 each bind NADP(+).

Belongs to the tetrahydrofolate dehydrogenase/cyclohydrolase family. Homodimer.

It catalyses the reaction (6R)-5,10-methylene-5,6,7,8-tetrahydrofolate + NADP(+) = (6R)-5,10-methenyltetrahydrofolate + NADPH. The enzyme catalyses (6R)-5,10-methenyltetrahydrofolate + H2O = (6R)-10-formyltetrahydrofolate + H(+). It participates in one-carbon metabolism; tetrahydrofolate interconversion. Its function is as follows. Catalyzes the oxidation of 5,10-methylenetetrahydrofolate to 5,10-methenyltetrahydrofolate and then the hydrolysis of 5,10-methenyltetrahydrofolate to 10-formyltetrahydrofolate. The protein is Bifunctional protein FolD of Streptococcus pneumoniae (strain ATCC BAA-255 / R6).